A 406-amino-acid polypeptide reads, in one-letter code: Dual-specificity RNA methyltransferase RlmN (406 aa).

Glutamate 119 serves as the catalytic Proton acceptor. Residues 125 to 370 form the Radical SAM core domain; it reads DKGRGTLCVS…AMVRRTRGDD (246 aa). Residues cysteine 132 and cysteine 375 are joined by a disulfide bond. Cysteine 139, cysteine 143, and cysteine 146 together coordinate [4Fe-4S] cluster. S-adenosyl-L-methionine-binding positions include 192-193, serine 224, 246-248, and asparagine 332; these read GE and SLH. The S-methylcysteine intermediate role is filled by cysteine 375.

Belongs to the radical SAM superfamily. RlmN family. It depends on [4Fe-4S] cluster as a cofactor.

The protein localises to the cytoplasm. The enzyme catalyses adenosine(2503) in 23S rRNA + 2 reduced [2Fe-2S]-[ferredoxin] + 2 S-adenosyl-L-methionine = 2-methyladenosine(2503) in 23S rRNA + 5'-deoxyadenosine + L-methionine + 2 oxidized [2Fe-2S]-[ferredoxin] + S-adenosyl-L-homocysteine. It carries out the reaction adenosine(37) in tRNA + 2 reduced [2Fe-2S]-[ferredoxin] + 2 S-adenosyl-L-methionine = 2-methyladenosine(37) in tRNA + 5'-deoxyadenosine + L-methionine + 2 oxidized [2Fe-2S]-[ferredoxin] + S-adenosyl-L-homocysteine. Functionally, specifically methylates position 2 of adenine 2503 in 23S rRNA and position 2 of adenine 37 in tRNAs. m2A2503 modification seems to play a crucial role in the proofreading step occurring at the peptidyl transferase center and thus would serve to optimize ribosomal fidelity. The sequence is that of Dual-specificity RNA methyltransferase RlmN from Xylella fastidiosa (strain 9a5c).